We begin with the raw amino-acid sequence, 213 residues long: Glycerol-3-phosphate acyltransferase (213 aa).

5 helical membrane passes run 3–23 (ILLA…VVVS), 51–71 (KAAI…VWLA), 78–98 (DVAV…PVFF), 115–135 (AVHP…AFFF), and 140–160 (LAAL…FGTP).

It belongs to the PlsY family. In terms of assembly, probably interacts with PlsX.

It is found in the cell inner membrane. The enzyme catalyses an acyl phosphate + sn-glycerol 3-phosphate = a 1-acyl-sn-glycero-3-phosphate + phosphate. It functions in the pathway lipid metabolism; phospholipid metabolism. In terms of biological role, catalyzes the transfer of an acyl group from acyl-phosphate (acyl-PO(4)) to glycerol-3-phosphate (G3P) to form lysophosphatidic acid (LPA). This enzyme utilizes acyl-phosphate as fatty acyl donor, but not acyl-CoA or acyl-ACP. The sequence is that of Glycerol-3-phosphate acyltransferase from Burkholderia cenocepacia (strain ATCC BAA-245 / DSM 16553 / LMG 16656 / NCTC 13227 / J2315 / CF5610) (Burkholderia cepacia (strain J2315)).